Reading from the N-terminus, the 120-residue chain is NAD(P)H-quinone oxidoreductase subunit 3, chloroplastic (120 aa).

3 helical membrane-spanning segments follow: residues 9–29 (IFWA…LLSG), 64–84 (MFAL…PWAM), and 88–108 (VLGV…IVGL).

Belongs to the complex I subunit 3 family. In terms of assembly, NDH is composed of at least 16 different subunits, 5 of which are encoded in the nucleus.

The protein localises to the plastid. It is found in the chloroplast thylakoid membrane. The enzyme catalyses a plastoquinone + NADH + (n+1) H(+)(in) = a plastoquinol + NAD(+) + n H(+)(out). It carries out the reaction a plastoquinone + NADPH + (n+1) H(+)(in) = a plastoquinol + NADP(+) + n H(+)(out). Functionally, NDH shuttles electrons from NAD(P)H:plastoquinone, via FMN and iron-sulfur (Fe-S) centers, to quinones in the photosynthetic chain and possibly in a chloroplast respiratory chain. The immediate electron acceptor for the enzyme in this species is believed to be plastoquinone. Couples the redox reaction to proton translocation, and thus conserves the redox energy in a proton gradient. The polypeptide is NAD(P)H-quinone oxidoreductase subunit 3, chloroplastic (Fagopyrum esculentum subsp. ancestrale (Wild buckwheat)).